Consider the following 874-residue polypeptide: Alanine--tRNA ligase (874 aa).

Zn(2+) is bound by residues His-562, His-566, Cys-664, and His-668.

The protein belongs to the class-II aminoacyl-tRNA synthetase family. Zn(2+) serves as cofactor.

The protein resides in the cytoplasm. The catalysed reaction is tRNA(Ala) + L-alanine + ATP = L-alanyl-tRNA(Ala) + AMP + diphosphate. Its function is as follows. Catalyzes the attachment of alanine to tRNA(Ala) in a two-step reaction: alanine is first activated by ATP to form Ala-AMP and then transferred to the acceptor end of tRNA(Ala). Also edits incorrectly charged Ser-tRNA(Ala) and Gly-tRNA(Ala) via its editing domain. The polypeptide is Alanine--tRNA ligase (Neisseria gonorrhoeae (strain ATCC 700825 / FA 1090)).